A 229-amino-acid polypeptide reads, in one-letter code: Ribonuclease 3 (229 aa).

In terms of domain architecture, RNase III spans 7 to 132 (ISAFCDRIGH…VIAAVYRDAG (126 aa)). Residue glutamate 45 participates in Mg(2+) binding. Aspartate 49 is a catalytic residue. Positions 118 and 121 each coordinate Mg(2+). The active site involves glutamate 121. A DRBM domain is found at 157–226 (DPKTALQEWA…AKALLAQVES (70 aa)).

The protein belongs to the ribonuclease III family. As to quaternary structure, homodimer. The cofactor is Mg(2+).

It is found in the cytoplasm. It carries out the reaction Endonucleolytic cleavage to 5'-phosphomonoester.. Its function is as follows. Digests double-stranded RNA. Involved in the processing of primary rRNA transcript to yield the immediate precursors to the large and small rRNAs (23S and 16S). Processes some mRNAs, and tRNAs when they are encoded in the rRNA operon. Processes pre-crRNA and tracrRNA of type II CRISPR loci if present in the organism. The polypeptide is Ribonuclease 3 (Dinoroseobacter shibae (strain DSM 16493 / NCIMB 14021 / DFL 12)).